The chain runs to 154 residues: tRNA (cytidine(34)-2'-O)-methyltransferase (154 aa).

Residues L78, G100, I122, and S130 each contribute to the S-adenosyl-L-methionine site.

Belongs to the class IV-like SAM-binding methyltransferase superfamily. RNA methyltransferase TrmH family. TrmL subfamily. Homodimer.

It is found in the cytoplasm. It carries out the reaction cytidine(34) in tRNA + S-adenosyl-L-methionine = 2'-O-methylcytidine(34) in tRNA + S-adenosyl-L-homocysteine + H(+). It catalyses the reaction 5-carboxymethylaminomethyluridine(34) in tRNA(Leu) + S-adenosyl-L-methionine = 5-carboxymethylaminomethyl-2'-O-methyluridine(34) in tRNA(Leu) + S-adenosyl-L-homocysteine + H(+). Its function is as follows. Methylates the ribose at the nucleotide 34 wobble position in the two leucyl isoacceptors tRNA(Leu)(CmAA) and tRNA(Leu)(cmnm5UmAA). Catalyzes the methyl transfer from S-adenosyl-L-methionine to the 2'-OH of the wobble nucleotide. This chain is tRNA (cytidine(34)-2'-O)-methyltransferase, found in Saccharophagus degradans (strain 2-40 / ATCC 43961 / DSM 17024).